The primary structure comprises 359 residues: Double-stranded RNA-binding protein 3 (359 aa).

2 DRBM domains span residues 1-70 and 87-155; these read MYKN…ALSS and IYKN…SLRK. Residues 266–280 show a composition bias toward basic and acidic residues; the sequence is EKKQSLDDPKPEMRI. 2 disordered regions span residues 266 to 292 and 328 to 359; these read EKKQ…SSSV and APPP…SLPN. A compositionally biased stretch (pro residues) spans 328–338; it reads APPPKPNPNPN.

In terms of biological role, binds double-stranded RNA. In Arabidopsis thaliana (Mouse-ear cress), this protein is Double-stranded RNA-binding protein 3 (DRB3).